The primary structure comprises 422 residues: Glucose-1-phosphate adenylyltransferase (422 aa).

Alpha-D-glucose 1-phosphate contacts are provided by residues Tyr-108, Gly-173, 188-189 (EK), and Ser-206.

This sequence belongs to the bacterial/plant glucose-1-phosphate adenylyltransferase family. As to quaternary structure, homotetramer.

It catalyses the reaction alpha-D-glucose 1-phosphate + ATP + H(+) = ADP-alpha-D-glucose + diphosphate. It functions in the pathway glycan biosynthesis; glycogen biosynthesis. Functionally, involved in the biosynthesis of ADP-glucose, a building block required for the elongation reactions to produce glycogen. Catalyzes the reaction between ATP and alpha-D-glucose 1-phosphate (G1P) to produce pyrophosphate and ADP-Glc. The chain is Glucose-1-phosphate adenylyltransferase from Paraburkholderia phymatum (strain DSM 17167 / CIP 108236 / LMG 21445 / STM815) (Burkholderia phymatum).